Consider the following 163-residue polypeptide: Thiol peroxidase (163 aa).

Positions 16–162 constitute a Thioredoxin domain; the sequence is LQVGDTAHDF…YDAAIAAVKS (147 aa). Cysteine 58 (cysteine sulfenic acid (-SOH) intermediate) is an active-site residue. Cysteine 58 and cysteine 92 form a disulfide bridge.

This sequence belongs to the peroxiredoxin family. Tpx subfamily. In terms of assembly, homodimer.

The catalysed reaction is a hydroperoxide + [thioredoxin]-dithiol = an alcohol + [thioredoxin]-disulfide + H2O. Functionally, thiol-specific peroxidase that catalyzes the reduction of hydrogen peroxide and organic hydroperoxides to water and alcohols, respectively. Plays a role in cell protection against oxidative stress by detoxifying peroxides. The chain is Thiol peroxidase from Streptococcus sanguinis.